The following is a 293-amino-acid chain: NAD kinase (293 aa).

Residue Asp-73 is the Proton acceptor of the active site. NAD(+) contacts are provided by residues 73–74 (DG), His-78, 147–148 (ND), Arg-158, Arg-175, Asp-177, 188–193 (TAYALS), and Gln-248.

Belongs to the NAD kinase family. Requires a divalent metal cation as cofactor.

The protein resides in the cytoplasm. It carries out the reaction NAD(+) + ATP = ADP + NADP(+) + H(+). In terms of biological role, involved in the regulation of the intracellular balance of NAD and NADP, and is a key enzyme in the biosynthesis of NADP. Catalyzes specifically the phosphorylation on 2'-hydroxyl of the adenosine moiety of NAD to yield NADP. This chain is NAD kinase, found in Nitrosococcus oceani (strain ATCC 19707 / BCRC 17464 / JCM 30415 / NCIMB 11848 / C-107).